A 289-amino-acid polypeptide reads, in one-letter code: Ribosomal RNA small subunit methyltransferase A (289 aa).

The S-adenosyl-L-methionine site is built by asparagine 28, leucine 30, glycine 55, glutamate 76, aspartate 101, and asparagine 125.

The protein belongs to the class I-like SAM-binding methyltransferase superfamily. rRNA adenine N(6)-methyltransferase family. RsmA subfamily.

It localises to the cytoplasm. It carries out the reaction adenosine(1518)/adenosine(1519) in 16S rRNA + 4 S-adenosyl-L-methionine = N(6)-dimethyladenosine(1518)/N(6)-dimethyladenosine(1519) in 16S rRNA + 4 S-adenosyl-L-homocysteine + 4 H(+). In terms of biological role, specifically dimethylates two adjacent adenosines (A1518 and A1519) in the loop of a conserved hairpin near the 3'-end of 16S rRNA in the 30S particle. May play a critical role in biogenesis of 30S subunits. This is Ribosomal RNA small subunit methyltransferase A from Clostridioides difficile (strain 630) (Peptoclostridium difficile).